We begin with the raw amino-acid sequence, 274 residues long: Undecaprenyl-diphosphatase (274 aa).

6 helical membrane-spanning segments follow: residues 44-64 (AKVF…LVYW), 85-105 (LNVV…GKMI), 109-129 (LFIP…ILWA), 185-205 (ATDF…AYSL), 214-234 (VADI…AWLC), and 247-267 (FIPF…TAWT).

This sequence belongs to the UppP family.

It is found in the cell inner membrane. It catalyses the reaction di-trans,octa-cis-undecaprenyl diphosphate + H2O = di-trans,octa-cis-undecaprenyl phosphate + phosphate + H(+). In terms of biological role, catalyzes the dephosphorylation of undecaprenyl diphosphate (UPP). Confers resistance to bacitracin. The polypeptide is Undecaprenyl-diphosphatase (Variovorax paradoxus (strain S110)).